A 258-amino-acid chain; its full sequence is Ribose-5-phosphate isomerase (258 aa).

Belongs to the ribose 5-phosphate isomerase family.

The protein resides in the cytoplasm. The catalysed reaction is aldehydo-D-ribose 5-phosphate = D-ribulose 5-phosphate. The protein operates within carbohydrate degradation; pentose phosphate pathway; D-ribose 5-phosphate from D-ribulose 5-phosphate (non-oxidative stage): step 1/1. In Saccharomyces cerevisiae (strain YJM789) (Baker's yeast), this protein is Ribose-5-phosphate isomerase (RKI1).